Here is a 222-residue protein sequence, read N- to C-terminus: Cytochrome b6 (222 aa).

A helical transmembrane segment spans residues 39 to 59 (IFYCLGGITLTCFLIQFATGF). Cysteine 42 is a heme c binding site. Residues histidine 93 and histidine 107 each contribute to the heme b site. The next 3 membrane-spanning stretches (helical) occupy residues 97–117 (ASMM…TGGF), 123–143 (LTWV…VTGY), and 193–213 (LHTF…FLMI). Histidine 194 and histidine 209 together coordinate heme b.

It belongs to the cytochrome b family. PetB subfamily. The 4 large subunits of the cytochrome b6-f complex are cytochrome b6, subunit IV (17 kDa polypeptide, PetD), cytochrome f and the Rieske protein, while the 4 small subunits are PetG, PetL, PetM and PetN. The complex functions as a dimer. Heme b is required as a cofactor. It depends on heme c as a cofactor.

The protein resides in the cellular thylakoid membrane. Its function is as follows. Component of the cytochrome b6-f complex, which mediates electron transfer between photosystem II (PSII) and photosystem I (PSI), cyclic electron flow around PSI, and state transitions. The polypeptide is Cytochrome b6 (Cyanothece sp. (strain PCC 7425 / ATCC 29141)).